Reading from the N-terminus, the 103-residue chain is N(4)-acetylcytidine amidohydrolase (103 aa).

In terms of domain architecture, ASCH spans 6–101 (ITFFQRFQDD…QTQFYVIEFK (96 aa)). Catalysis depends on K21, which acts as the Proton acceptor. The active-site Nucleophile is T24. The active-site Proton donor is the E74.

Belongs to the N(4)-acetylcytidine amidohydrolase family.

It catalyses the reaction N(4)-acetylcytidine + H2O = cytidine + acetate + H(+). It carries out the reaction N(4)-acetyl-2'-deoxycytidine + H2O = 2'-deoxycytidine + acetate + H(+). The catalysed reaction is N(4)-acetylcytosine + H2O = cytosine + acetate + H(+). Catalyzes the hydrolysis of N(4)-acetylcytidine (ac4C). The chain is N(4)-acetylcytidine amidohydrolase (yqfB) from Escherichia fergusonii (strain ATCC 35469 / DSM 13698 / CCUG 18766 / IAM 14443 / JCM 21226 / LMG 7866 / NBRC 102419 / NCTC 12128 / CDC 0568-73).